The primary structure comprises 229 residues: MKQYGAEFFGTFWLVLGGCGSAVLAAGVPELGIGYLGVALAFGLSVLTMAYAIGPISGAHLNPAVSVGLWVGGRFPASQLLPYVVAQVLGGLAAGGVLYLIASGKAGFDLAAGFASNGYGEHSPGGYSLQAALVSEVVLTGMFLLIILGATSKRAPQGFAPIAIGLTLTLIHLISIPVTNTSVNPARSTAVALYVGDWAVSQLWLFWVAPILGAVLGALAYRLIGDKND.

Transmembrane regions (helical) follow at residues 8 to 28 (FFGT…AAGV) and 33 to 53 (IGYL…AYAI). Positions 62 to 64 (NPA) match the NPA 1 motif. The next 3 membrane-spanning stretches (helical) occupy residues 81–101 (LPYV…LYLI), 131–151 (AALV…LGAT), and 158–178 (GFAP…SIPV). The short motif at 184–186 (NPA) is the NPA 2 element. A helical membrane pass occupies residues 199–219 (AVSQLWLFWVAPILGAVLGAL).

This sequence belongs to the MIP/aquaporin (TC 1.A.8) family. Homotetramer.

It is found in the cell inner membrane. It catalyses the reaction H2O(in) = H2O(out). In terms of biological role, channel that permits osmotically driven movement of water in both directions. It is involved in the osmoregulation and in the maintenance of cell turgor during volume expansion in rapidly growing cells. It mediates rapid entry or exit of water in response to abrupt changes in osmolarity. The polypeptide is Aquaporin Z (Pseudomonas aeruginosa (strain ATCC 15692 / DSM 22644 / CIP 104116 / JCM 14847 / LMG 12228 / 1C / PRS 101 / PAO1)).